The primary structure comprises 376 residues: Enoyl-[acyl-carrier-protein] reductase, mitochondrial (376 aa).

A mitochondrion-targeting transit peptide spans 1 to 12 (MLRTLRTSQLAR). The active-site Proton donor is Y79. NADP(+)-binding positions include N160, 183–186 (NSGV), 206–208 (RDR), 277–280 (YGGM), 302–304 (YWL), and K368.

This sequence belongs to the zinc-containing alcohol dehydrogenase family. Quinone oxidoreductase subfamily. In terms of assembly, homodimer.

The protein resides in the mitochondrion matrix. It catalyses the reaction a 2,3-saturated acyl-[ACP] + NADP(+) = a (2E)-enoyl-[ACP] + NADPH + H(+). Functionally, catalyzes the NADPH-dependent reduction of trans-2-enoyl thioesters in mitochondrial fatty acid synthesis (fatty acid synthesis type II). Fatty acid chain elongation in mitochondria uses acyl carrier protein (ACP) as an acyl group carrier, but the enzyme accepts both ACP and CoA thioesters as substrates in vitro. Required for respiration and the maintenance of the mitochondrial compartment. This chain is Enoyl-[acyl-carrier-protein] reductase, mitochondrial (ETR1), found in Yarrowia lipolytica (strain CLIB 122 / E 150) (Yeast).